The sequence spans 263 residues: Purine nucleoside phosphorylase SAV1187 (263 aa).

Zn(2+) contacts are provided by His-79, Cys-124, and His-141.

This sequence belongs to the purine nucleoside phosphorylase YfiH/LACC1 family. In terms of assembly, homodimer. Cu(2+) serves as cofactor. It depends on Zn(2+) as a cofactor.

It catalyses the reaction adenosine + phosphate = alpha-D-ribose 1-phosphate + adenine. The enzyme catalyses S-methyl-5'-thioadenosine + phosphate = 5-(methylsulfanyl)-alpha-D-ribose 1-phosphate + adenine. The catalysed reaction is inosine + phosphate = alpha-D-ribose 1-phosphate + hypoxanthine. It carries out the reaction adenosine + H2O + H(+) = inosine + NH4(+). Functionally, purine nucleoside enzyme that catalyzes the phosphorolysis of adenosine and inosine nucleosides, yielding D-ribose 1-phosphate and the respective free bases, adenine and hypoxanthine. Also catalyzes the phosphorolysis of S-methyl-5'-thioadenosine into adenine and S-methyl-5-thio-alpha-D-ribose 1-phosphate. Also has adenosine deaminase activity. In Staphylococcus aureus (strain Mu50 / ATCC 700699), this protein is Purine nucleoside phosphorylase SAV1187.